Here is a 102-residue protein sequence, read N- to C-terminus: Acid shock protein (102 aa).

A signal peptide spans 1-21 (MKKVLALVVAAAMGLSSAAFA). A propeptide spanning residues 22–58 (AETAITPAPTATTTKAAPAKTTHHKKQHKAAPAQKAQ) is cleaved from the precursor. The segment covering 26 to 41 (ITPAPTATTTKAAPAK) has biased composition (low complexity). Residues 26 to 102 (ITPAPTATTT…PAKPAAQPAA (77 aa)) are disordered. Basic residues predominate over residues 80-90 (AAKKHAKKHSH). Positions 91–102 (QQPAKPAAQPAA) are enriched in low complexity.

This sequence belongs to the Asr family. Post-translationally, proteolytic processing gives rise to the active protein.

It localises to the periplasm. Functionally, required for growth and/or survival at acidic conditions. The chain is Acid shock protein from Escherichia coli O81 (strain ED1a).